The chain runs to 60 residues: METLSIEIRLYMRRRAWSRRHFAHGTRAVEGTGYIKPVCPTRKSVSIVLRRTRSLARRIV.

This is an uncharacterized protein from Autographa californica nuclear polyhedrosis virus (AcMNPV).